We begin with the raw amino-acid sequence, 670 residues long: UvrABC system protein B (670 aa).

Residues 26-414 enclose the Helicase ATP-binding domain; that stretch reads EGLEDGLAHQ…GGDVIDQVVR (389 aa). 39 to 46 contacts ATP; the sequence is GVTGSGKT. Residues 92–115 carry the Beta-hairpin motif; that stretch reads YYDYYQPEAYVPSSDTFIEKDASV. The Helicase C-terminal domain occupies 431 to 597; that stretch reads QVDDLLSEIR…GINKKISDIL (167 aa). The UVR domain maps to 630-665; that stretch reads ELKIRELESKMLTHAQNLEFEEAAALRDEVQVLRAQ.

Belongs to the UvrB family. As to quaternary structure, forms a heterotetramer with UvrA during the search for lesions. Interacts with UvrC in an incision complex.

Its subcellular location is the cytoplasm. Its function is as follows. The UvrABC repair system catalyzes the recognition and processing of DNA lesions. A damage recognition complex composed of 2 UvrA and 2 UvrB subunits scans DNA for abnormalities. Upon binding of the UvrA(2)B(2) complex to a putative damaged site, the DNA wraps around one UvrB monomer. DNA wrap is dependent on ATP binding by UvrB and probably causes local melting of the DNA helix, facilitating insertion of UvrB beta-hairpin between the DNA strands. Then UvrB probes one DNA strand for the presence of a lesion. If a lesion is found the UvrA subunits dissociate and the UvrB-DNA preincision complex is formed. This complex is subsequently bound by UvrC and the second UvrB is released. If no lesion is found, the DNA wraps around the other UvrB subunit that will check the other stand for damage. This Pectobacterium atrosepticum (strain SCRI 1043 / ATCC BAA-672) (Erwinia carotovora subsp. atroseptica) protein is UvrABC system protein B.